The chain runs to 86 residues: MKEGIHPNYREVVFQDMSSDFKFITRSTIQTKEMITLDGKEYPLAKIEVSSESHPFYTGQQKVLDTAGRVEKFRNKFGSKIGKAAK.

The protein belongs to the bacterial ribosomal protein bL31 family. Type B subfamily. In terms of assembly, part of the 50S ribosomal subunit.

The chain is Large ribosomal subunit protein bL31B from Ralstonia pickettii (strain 12J).